Reading from the N-terminus, the 428-residue chain is GTPase Obg (428 aa).

The region spanning 1–158 (MFVDQVKVYV…RYIVLELKVL (158 aa)) is the Obg domain. Residues 117 to 143 (ARGGRGGRGNSRFATPANPAPQLSENG) are disordered. Positions 159 to 329 (ADVGLVGFPS…LLFEVANQLE (171 aa)) constitute an OBG-type G domain. GTP is bound by residues 165–172 (GFPSVGKS), 190–194 (FTTLV), 212–215 (DLPG), 282–285 (NKMD), and 310–312 (SAV). 2 residues coordinate Mg(2+): Ser-172 and Thr-192. The OCT domain occupies 350 to 428 (TMENEEVPFN…LLEFEFEFID (79 aa)).

This sequence belongs to the TRAFAC class OBG-HflX-like GTPase superfamily. OBG GTPase family. As to quaternary structure, monomer. Interacts with TasA (AC P54507) in pull-down experiments. The cofactor is Mg(2+).

It is found in the cytoplasm. Inhibited by GDP; less than 20 uM ppGpp stimulates the GTPase, while higher concentrations inhibit. Necessary for the transition from vegetative growth to stage 0 or stage II of sporulation, but sporulation subsequent to these stages is unaffected at 45 degrees Celsius. This ts effect is probably due solely to the E-79 mutation. Required for expression of early sporulation genes, further suggesting a role in the induction of sporulation. Depletion effects on sporulation can be partially suppressed by missense mutations in spo0A. Strains depleted for obg stop growing after about 3 hours and do not induce the sigma-B factor following ethanol stress. It cofractionates with the ribosome and upstream stress response regulators RsbR, RsbS and RsbT in size fractionation columns, suggesting the ribosome might serve as a possible mediator of the activity of obg and the stress induction of sigma-B. In glycerol gradients partially associates with ribosomes; this is stabilized by a nonhydrolyzable GTP-analog and to a lesser extent GTP and GDP. Its function is as follows. An essential GTPase which binds GTP, GDP and possibly (p)ppGpp with moderate affinity, with high nucleotide exchange rates and a fairly low GTP hydrolysis rate. Plays a role in control of the cell cycle, stress response, ribosome biogenesis and in those bacteria that undergo differentiation, in morphogenesis control. This is GTPase Obg from Bacillus subtilis (strain 168).